The chain runs to 339 residues: DNA-directed RNA polymerase subunit alpha (339 aa).

Positions methionine 1–glutamate 235 are alpha N-terminal domain (alpha-NTD). Residues phenylalanine 251–tyrosine 339 form an alpha C-terminal domain (alpha-CTD) region.

This sequence belongs to the RNA polymerase alpha chain family. As to quaternary structure, homodimer. The RNAP catalytic core consists of 2 alpha, 1 beta, 1 beta' and 1 omega subunit. When a sigma factor is associated with the core the holoenzyme is formed, which can initiate transcription.

The enzyme catalyses RNA(n) + a ribonucleoside 5'-triphosphate = RNA(n+1) + diphosphate. Functionally, DNA-dependent RNA polymerase catalyzes the transcription of DNA into RNA using the four ribonucleoside triphosphates as substrates. The polypeptide is DNA-directed RNA polymerase subunit alpha (Methylobacterium radiotolerans (strain ATCC 27329 / DSM 1819 / JCM 2831 / NBRC 15690 / NCIMB 10815 / 0-1)).